Here is an 84-residue protein sequence, read N- to C-terminus: UPF0386 protein R01313 (84 aa).

Belongs to the UPF0386 family.

The polypeptide is UPF0386 protein R01313 (Rhizobium meliloti (strain 1021) (Ensifer meliloti)).